Reading from the N-terminus, the 590-residue chain is Protein NRT1/ PTR FAMILY 8.5 (590 aa).

A helical transmembrane segment spans residues 96 to 116 (ASDVMIWQGTCYITPLIGAVI). Phosphothreonine is present on Thr126. A run of 10 helical transmembrane segments spans residues 130–150 (FSAI…LPVL), 168–188 (TVQY…TGGI), 214–234 (FFNW…TLLV), 242–262 (WGLG…SFFI), 365–385 (FPIW…STLF), 401–421 (IPPA…IPIY), 445–465 (MGIG…VETV), 478–498 (IFWQ…FFIG), 524–544 (AVGS…TALG), and 562–582 (FFWL…LICV).

The protein belongs to the major facilitator superfamily. Proton-dependent oligopeptide transporter (POT/PTR) (TC 2.A.17) family. As to expression, expressed in shoots, roots, stems, leaves, flowers and siliques.

It localises to the membrane. The polypeptide is Protein NRT1/ PTR FAMILY 8.5 (NPF8.5) (Arabidopsis thaliana (Mouse-ear cress)).